A 554-amino-acid polypeptide reads, in one-letter code: Valerianol synthase TPS1E (554 aa).

Residues Asp-307 and Asp-311 each coordinate Mg(2+). The DDXXD motif signature appears at 326–330 (VQRWD). Residues Asp-452, Ser-456, and Glu-460 each coordinate Mg(2+).

It belongs to the terpene synthase family. The cofactor is Mg(2+).

The catalysed reaction is (2E,6E)-farnesyl diphosphate + H2O = valerianol + diphosphate. It functions in the pathway secondary metabolite biosynthesis; terpenoid biosynthesis. In terms of biological role, terpene synthase that catalyzes the biosynthesis of the terpene valerianol, which is a volatile compound of floral scent. The chain is Valerianol synthase TPS1E from Camellia hiemalis (Camellia).